The primary structure comprises 231 residues: Small ribosomal subunit protein uS5 (231 aa).

Residues 1–63 (MADLENKTVK…KSVDRANKVK (63 aa)) form a disordered region. Positions 29-60 (KRTESGAKKQIWEKRSAHDSKDMPKKSVDRAN) are enriched in basic and acidic residues. The 64-residue stretch at 75-138 (FSEKVVNISR…KDARNHLISV (64 aa)) folds into the S5 DRBM domain.

It belongs to the universal ribosomal protein uS5 family. In terms of assembly, part of the 30S ribosomal subunit. Contacts proteins S4 and S8.

In terms of biological role, with S4 and S12 plays an important role in translational accuracy. Located at the back of the 30S subunit body where it stabilizes the conformation of the head with respect to the body. This is Small ribosomal subunit protein uS5 from Mycoplasmopsis agalactiae (strain NCTC 10123 / CIP 59.7 / PG2) (Mycoplasma agalactiae).